A 560-amino-acid chain; its full sequence is Interferon alpha/beta receptor 1 (560 aa).

Positions 1–24 are cleaved as a signal peptide; it reads MLGLLGATTLMLVAGAPWVLPAGG. Residues 25-437 are Extracellular-facing; the sequence is ADLRSPENVV…EKTKPGSTSQ (413 aa). Fibronectin type-III domains follow at residues 29–125, 133–224, 231–329, and 333–433; these read SPEN…FQEA, HLEA…INTT, SPEN…TEMQ, and FPPV…TKPG. N55 carries an N-linked (GlcNAc...) asparagine glycan. A disulfide bridge links C76 with C84. 3 N-linked (GlcNAc...) asparagine glycosylation sites follow: N85, N108, and N172. The cysteines at positions 199 and 220 are disulfide-linked. Residues N222, N249, and N254 are each glycosylated (N-linked (GlcNAc...) asparagine). A disulfide bridge connects residues C283 and C291. N313, N377, and N417 each carry an N-linked (GlcNAc...) asparagine glycan. C404 and C427 form a disulfide bridge. Residues 438–458 form a helical membrane-spanning segment; it reads AWLIAGILSAILLFPAVFYGV. The Cytoplasmic segment spans residues 459 to 560; it reads KVVSRCINYV…GEEILRQAAV (102 aa). C464 carries the S-palmitoyl cysteine lipid modification. Phosphotyrosine; by TYK2 is present on residues Y467 and Y482. The important for interaction with TYK2 stretch occupies residues 492–501; it reads LLSTSEEQTE. S496 and S536 each carry phosphoserine. The tract at residues 520–560 is disordered; it reads QIDDNHSRCSSQTNRDSGVYSNEDENSGSKIGEEILRQAAV. Over residues 527–539 the composition is skewed to polar residues; that stretch reads RCSSQTNRDSGVY. Residues 550-560 show a composition bias toward basic and acidic residues; the sequence is IGEEILRQAAV.

It belongs to the type II cytokine receptor family. Heterodimer with IFNAR2; forming the receptor for type I interferon. Interacts with TYK2. Interacts with STAT1 and STAT2; the interaction requires its phosphorylation at Tyr-482. Interacts (serine-phosphorylated form) with FBXW11, the substrate recognition component of a SCF (SKP1-CUL1-F-box protein) E3 ubiquitin-protein ligase complex. Interacts with SHMT2; this promotes interaction with ABRAXAS2 and the BRISC complex. Interacts with TRIM10; this interaction prevents association between IFNAR1 and TYK2. In terms of processing, ubiquitinated, leading to its internalization and degradation. Polyubiquitinated via 'Lys-48'-linked and 'Lys-63'-linked ubiquitin chains, leading to receptor internalization and lysosomal degradation. The 'Lys-63'-linked ubiquitin chains are cleaved off by the BRISC complex. Post-translationally, phosphorylated on tyrosine residues in response to interferon-binding: phosphorylation by TYK2 tyrosine kinase creates docking sites for STAT proteins. Phosphorylated on serine residues in response to interferon binding; this promotes interaction with FBXW11 and ubiquitination. Palmitoylation at Cys-464 is required for the activation of STAT1 and STAT2.

It is found in the cell membrane. The protein localises to the late endosome. It localises to the lysosome. In terms of biological role, together with IFNAR2, forms the heterodimeric receptor for type I interferons (including interferons alpha, beta, epsilon, omega and kappa). Type I interferon binding activates the JAK-STAT signaling cascade, resulting in transcriptional activation or repression of interferon-regulated genes that encode the effectors of the interferon response. Mechanistically, type I interferon-binding brings the IFNAR1 and IFNAR2 subunits into close proximity with one another, driving their associated Janus kinases (JAKs) (TYK2 bound to IFNAR1 and JAK1 bound to IFNAR2) to cross-phosphorylate one another. The activated kinases phosphorylate specific tyrosine residues on the intracellular domains of IFNAR1 and IFNAR2, forming docking sites for the STAT transcription factors. STAT proteins are then phosphorylated by the JAKs, promoting their translocation into the nucleus to regulate expression of interferon-regulated genes. Can also act independently of IFNAR2: form an active IFNB1 receptor by itself and activate a signaling cascade that does not involve activation of the JAK-STAT pathway. The sequence is that of Interferon alpha/beta receptor 1 (IFNAR1) from Sus scrofa (Pig).